A 463-amino-acid polypeptide reads, in one-letter code: NADH dehydrogenase [ubiquinone] iron-sulfur protein 2, mitochondrial (463 aa).

The N-terminal 33 residues, 1–33, are a transit peptide targeting the mitochondrion; it reads MAALRALRCLRGVGAPVLRPGSGIRLPSQPSRG. K62 is subject to N6-acetyllysine. At R118 the chain carries Symmetric dimethylarginine. Residues C326, C332, and C347 each coordinate [4Fe-4S] cluster.

This sequence belongs to the complex I 49 kDa subunit family. As to quaternary structure, core subunit of respiratory chain NADH dehydrogenase (Complex I) which is composed of 45 different subunits. Component of the iron-sulfur (IP) fragment of the enzyme. Interacts with NDUFAF3. Interacts with NDUFAF7. Interacts with CERS2. It depends on [4Fe-4S] cluster as a cofactor. In terms of processing, dimethylation at Arg-118 by NDUFAF7 takes place after NDUFS2 assembles into the complex I, leading to stabilize the early intermediate complex.

It is found in the mitochondrion inner membrane. It carries out the reaction a ubiquinone + NADH + 5 H(+)(in) = a ubiquinol + NAD(+) + 4 H(+)(out). Functionally, core subunit of the mitochondrial membrane respiratory chain NADH dehydrogenase (Complex I) which catalyzes electron transfer from NADH through the respiratory chain, using ubiquinone as an electron acceptor. Essential for the catalytic activity and assembly of complex I. Redox-sensitive, critical component of the oxygen-sensing pathway in the pulmonary vasculature which plays a key role in acute pulmonary oxygen-sensing and hypoxic pulmonary vasoconstriction. Plays an important role in carotid body sensing of hypoxia. Essential for glia-like neural stem and progenitor cell proliferation, differentiation and subsequent oligodendrocyte or neuronal maturation. The chain is NADH dehydrogenase [ubiquinone] iron-sulfur protein 2, mitochondrial (Ndufs2) from Mus musculus (Mouse).